The sequence spans 52 residues: Large ribosomal subunit protein bL33 (52 aa).

Belongs to the bacterial ribosomal protein bL33 family.

This chain is Large ribosomal subunit protein bL33, found in Campylobacter jejuni subsp. doylei (strain ATCC BAA-1458 / RM4099 / 269.97).